A 415-amino-acid polypeptide reads, in one-letter code: Arrestin red cell isoform 3 (415 aa).

Belongs to the arrestin family.

It localises to the cytoplasm. The polypeptide is Arrestin red cell isoform 3 (Oncorhynchus mykiss (Rainbow trout)).